The chain runs to 463 residues: L-2-hydroxyglutarate dehydrogenase, mitochondrial (463 aa).

The transit peptide at 1–52 (MVPALRYLGSVCGRARGIFPGGFSAAHTPASGKSRLLCQGGRRASTSSFDIV) directs the protein to the mitochondrion. Lys104 and Lys173 each carry N6-acetyllysine.

The protein belongs to the L2HGDH family. It depends on FAD as a cofactor.

The protein localises to the mitochondrion. It carries out the reaction (S)-2-hydroxyglutarate + A = 2-oxoglutarate + AH2. The protein is L-2-hydroxyglutarate dehydrogenase, mitochondrial (L2HGDH) of Bos taurus (Bovine).